Here is a 384-residue protein sequence, read N- to C-terminus: MTVTLGMPAAPARPLGTRRHSRQINVGNVPVGGDAPVSVQSMCTTLTSDVNATLQQIAQLTASGCQIVRVAVPSQDDADALAAIARKSPIPVIADIHFQPKYVFAAIDAGCAAVRVNPGNIKAFDDKVGEIARAAKGAGIPIRIGVNAGSLDKRLLAKYGKATPEALTESALWECSLFEEHDFRDIKISVKHHDPVVMIQAYRLLAQSCDYPLHLGVTEAGPAFQGTVKSSVAFGALLAEGIGDTIRVSLSAPPVEEVKVGTAILESLGLRQRKLEIVSCPSCGRAQVDVYTLANQVSAGLEGMEVPLRVAVMGCVVNGPGEAREADLGVASGNGKGQIFVKGEVVKTVPEAQIVETLIEEAMRLAEEMTADGTPSGEPSVTVS.

Cysteine 280, cysteine 283, cysteine 315, and glutamate 322 together coordinate [4Fe-4S] cluster.

It belongs to the IspG family. It depends on [4Fe-4S] cluster as a cofactor.

It catalyses the reaction (2E)-4-hydroxy-3-methylbut-2-enyl diphosphate + oxidized [flavodoxin] + H2O + 2 H(+) = 2-C-methyl-D-erythritol 2,4-cyclic diphosphate + reduced [flavodoxin]. It functions in the pathway isoprenoid biosynthesis; isopentenyl diphosphate biosynthesis via DXP pathway; isopentenyl diphosphate from 1-deoxy-D-xylulose 5-phosphate: step 5/6. Functionally, converts 2C-methyl-D-erythritol 2,4-cyclodiphosphate (ME-2,4cPP) into 1-hydroxy-2-methyl-2-(E)-butenyl 4-diphosphate. The sequence is that of 4-hydroxy-3-methylbut-2-en-1-yl diphosphate synthase (flavodoxin) from Frankia alni (strain DSM 45986 / CECT 9034 / ACN14a).